Consider the following 101-residue polypeptide: Protein Tat (101 aa).

Residues 1–24 are interaction with human CREBBP; sequence MDPVDPNLEPWNHPGSQPKTPCNK. Positions 1–48 are transactivation; the sequence is MDPVDPNLEPWNHPGSQPKTPCNKCFCKVCCWHCQVCFLNKGLGISYG. Residues C22, C25, and C27 each coordinate Zn(2+). The interval 22-37 is cysteine-rich; that stretch reads CNKCFCKVCCWHCQVC. K28 bears the N6-acetyllysine; by host PCAF mark. Zn(2+)-binding residues include C30, H33, C34, and C37. Residues 38-48 are core; it reads FLNKGLGISYG. Residues 48 to 57 are compositionally biased toward basic residues; sequence GRKKRKHRRG. Residues 48-101 form a disordered region; the sequence is GRKKRKHRRGTPQSSKGHQDPVPKQPLPTTRGNPTGPKESKKEVASKAEADQCD. Residues 49-57 carry the Nuclear localization signal, RNA-binding (TAR), and protein transduction motif; the sequence is RKKRKHRRG. Positions 49-86 are interaction with the host capping enzyme RNGTT; the sequence is RKKRKHRRGTPQSSKGHQDPVPKQPLPTTRGNPTGPKE. N6-acetyllysine; by host EP300 and GCN5L2 is present on residues K50 and K51. R52 is subject to Asymmetric dimethylarginine; by host PRMT6. K71 participates in a covalent cross-link: Glycyl lysine isopeptide (Lys-Gly) (interchain with G-Cter in ubiquitin). Residues 85 to 101 show a composition bias toward basic and acidic residues; that stretch reads KESKKEVASKAEADQCD.

It belongs to the lentiviruses Tat family. Interacts with host CCNT1. Associates with the P-TEFb complex composed at least of Tat, P-TEFb (CDK9 and CCNT1), TAR RNA, RNA Pol II. Recruits the HATs CREBBP, TAF1/TFIID, EP300, PCAF and GCN5L2. Interacts with host KAT5/Tip60; this interaction targets the latter to degradation. Interacts with the host deacetylase SIRT1. Interacts with host capping enzyme RNGTT; this interaction stimulates RNGTT. Binds to host KDR, and to the host integrins ITGAV/ITGB3 and ITGA5/ITGB1. Interacts with host KPNB1/importin beta-1 without previous binding to KPNA1/importin alpha-1. Interacts with EIF2AK2. Interacts with host nucleosome assembly protein NAP1L1; this interaction may be required for the transport of Tat within the nucleus, since the two proteins interact at the nuclear rim. Interacts with host C1QBP/SF2P32; this interaction involves lysine-acetylated Tat. Interacts with the host chemokine receptors CCR2, CCR3 and CXCR4. Interacts with host DPP4/CD26; this interaction may trigger an anti-proliferative effect. Interacts with host LDLR. Interacts with the host extracellular matrix metalloproteinase MMP1. Interacts with host PRMT6; this interaction mediates Tat's methylation. Interacts with, and is ubiquitinated by MDM2/Hdm2. Interacts with host PSMC3 and HTATIP2. Interacts with STAB1; this interaction may overcome SATB1-mediated repression of IL2 and IL2RA (interleukin) in T cells by binding to the same domain than HDAC1. Interacts (when acetylated) with human CDK13, thereby increasing HIV-1 mRNA splicing and promoting the production of the doubly spliced HIV-1 protein Nef. Interacts with host TBP; this interaction modulates the activity of transcriptional pre-initiation complex. Interacts with host RELA. Interacts with host PLSCR1; this interaction negatively regulates Tat transactivation activity by altering its subcellular distribution. Asymmetrical arginine methylation by host PRMT6 seems to diminish the transactivation capacity of Tat and affects the interaction with host CCNT1. In terms of processing, acetylation by EP300, CREBBP, GCN5L2/GCN5 and PCAF regulates the transactivation activity of Tat. EP300-mediated acetylation of Lys-50 promotes dissociation of Tat from the TAR RNA through the competitive binding to PCAF's bromodomain. In addition, the non-acetylated Tat's N-terminus can also interact with PCAF. PCAF-mediated acetylation of Lys-28 enhances Tat's binding to CCNT1. Lys-50 is deacetylated by SIRT1. Post-translationally, polyubiquitination by host MDM2 does not target Tat to degradation, but activates its transactivation function and fosters interaction with CCNT1 and TAR RNA. Phosphorylated by EIF2AK2 on serine and threonine residues adjacent to the basic region important for TAR RNA binding and function. Phosphorylation of Tat by EIF2AK2 is dependent on the prior activation of EIF2AK2 by dsRNA.

The protein resides in the host nucleus. It is found in the host nucleolus. It localises to the host cytoplasm. Its subcellular location is the secreted. In terms of biological role, transcriptional activator that increases RNA Pol II processivity, thereby increasing the level of full-length viral transcripts. Recognizes a hairpin structure at the 5'-LTR of the nascent viral mRNAs referred to as the transactivation responsive RNA element (TAR) and recruits the cyclin T1-CDK9 complex (P-TEFb complex) that will in turn hyperphosphorylate the RNA polymerase II to allow efficient elongation. The CDK9 component of P-TEFb and other Tat-activated kinases hyperphosphorylate the C-terminus of RNA Pol II that becomes stabilized and much more processive. Other factors such as HTATSF1/Tat-SF1, SUPT5H/SPT5, and HTATIP2 are also important for Tat's function. Besides its effect on RNA Pol II processivity, Tat induces chromatin remodeling of proviral genes by recruiting the histone acetyltransferases (HATs) CREBBP, EP300 and PCAF to the chromatin. This also contributes to the increase in proviral transcription rate, especially when the provirus integrates in transcriptionally silent region of the host genome. To ensure maximal activation of the LTR, Tat mediates nuclear translocation of NF-kappa-B by interacting with host RELA. Through its interaction with host TBP, Tat may also modulate transcription initiation. Tat can reactivate a latently infected cell by penetrating in it and transactivating its LTR promoter. In the cytoplasm, Tat is thought to act as a translational activator of HIV-1 mRNAs. Its function is as follows. Extracellular circulating Tat can be endocytosed by surrounding uninfected cells via the binding to several surface receptors such as CD26, CXCR4, heparan sulfate proteoglycans (HSPG) or LDLR. Neurons are rarely infected, but they internalize Tat via their LDLR. Through its interaction with nuclear HATs, Tat is potentially able to control the acetylation-dependent cellular gene expression. Modulates the expression of many cellular genes involved in cell survival, proliferation or in coding for cytokines or cytokine receptors. Tat plays a role in T-cell and neurons apoptosis. Tat induced neurotoxicity and apoptosis probably contribute to neuroAIDS. Circulating Tat also acts as a chemokine-like and/or growth factor-like molecule that binds to specific receptors on the surface of the cells, affecting many cellular pathways. In the vascular system, Tat binds to ITGAV/ITGB3 and ITGA5/ITGB1 integrins dimers at the surface of endothelial cells and competes with bFGF for heparin-binding sites, leading to an excess of soluble bFGF. This Homo sapiens (Human) protein is Protein Tat.